The chain runs to 75 residues: uncharacterized protein (75 aa).

Positions 3-45 (TTVFLSNRSQAVRLPKAVALPENVKRVEVIAVGRTRIITPAGE) constitute a SpoVT-AbrB domain.

The protein belongs to the VapB family.

This is an uncharacterized protein from Escherichia coli (strain K12).